Consider the following 90-residue polypeptide: Long neurotoxin 1 (90 aa).

An N-terminal signal peptide occupies residues 1–21 (MKTLLLTLVVVTIVCLDVGNS). Disulfide bonds link Cys24–Cys42, Cys35–Cys63, Cys48–Cys52, Cys67–Cys78, and Cys79–Cys84.

This sequence belongs to the three-finger toxin family. Long-chain subfamily. Type II alpha-neurotoxin sub-subfamily. In terms of tissue distribution, expressed by the venom gland.

The protein localises to the secreted. Functionally, binds with high affinity to muscular (alpha-1/CHRNA1) and neuronal (alpha-7/CHRNA7) nicotinic acetylcholine receptor (nAChR) and inhibits acetylcholine from binding to the receptor, thereby impairing neuromuscular and neuronal transmission. The sequence is that of Long neurotoxin 1 from Austrelaps superbus (Lowland copperhead snake).